The sequence spans 326 residues: Virulence-associated V antigen (326 aa).

Its subcellular location is the secreted. Its function is as follows. Involved in calcium regulation of yop expression, which includes the export process. The chain is Virulence-associated V antigen (lcrV) from Yersinia pseudotuberculosis serotype I (strain IP32953).